Reading from the N-terminus, the 750-residue chain is 1,4-alpha-glucan branching enzyme GlgB (750 aa).

The Nucleophile role is filled by Asp-425. Glu-478 acts as the Proton donor in catalysis.

Belongs to the glycosyl hydrolase 13 family. GlgB subfamily. In terms of assembly, monomer.

The enzyme catalyses Transfers a segment of a (1-&gt;4)-alpha-D-glucan chain to a primary hydroxy group in a similar glucan chain.. It participates in glycan biosynthesis; glycogen biosynthesis. Functionally, catalyzes the formation of the alpha-1,6-glucosidic linkages in glycogen by scission of a 1,4-alpha-linked oligosaccharide from growing alpha-1,4-glucan chains and the subsequent attachment of the oligosaccharide to the alpha-1,6 position. The sequence is that of 1,4-alpha-glucan branching enzyme GlgB from Cupriavidus pinatubonensis (strain JMP 134 / LMG 1197) (Cupriavidus necator (strain JMP 134)).